Here is a 152-residue protein sequence, read N- to C-terminus: Deoxyuridine 5'-triphosphate nucleotidohydrolase (152 aa).

Substrate is bound by residues 71–73, asparagine 84, 88–90, and methionine 98; these read RSG and LID.

The protein belongs to the dUTPase family. Mg(2+) serves as cofactor.

The catalysed reaction is dUTP + H2O = dUMP + diphosphate + H(+). Its pathway is pyrimidine metabolism; dUMP biosynthesis; dUMP from dCTP (dUTP route): step 2/2. Functionally, this enzyme is involved in nucleotide metabolism: it produces dUMP, the immediate precursor of thymidine nucleotides and it decreases the intracellular concentration of dUTP so that uracil cannot be incorporated into DNA. This Shewanella sediminis (strain HAW-EB3) protein is Deoxyuridine 5'-triphosphate nucleotidohydrolase.